Consider the following 441-residue polypeptide: Ribosomal protein uS12 methylthiotransferase RimO (441 aa).

Positions 7–117 (PKISFVSLGC…VLEAVHRARP (111 aa)) constitute an MTTase N-terminal domain. Positions 16, 52, 81, 148, 152, and 155 each coordinate [4Fe-4S] cluster. The Radical SAM core domain occupies 134-371 (LTPRHYAYLK…MARQQAISAR (238 aa)). The 67-residue stretch at 374-440 (KRKVGTRQQV…AYDLHGTVAG (67 aa)) folds into the TRAM domain.

The protein belongs to the methylthiotransferase family. RimO subfamily. [4Fe-4S] cluster serves as cofactor.

Its subcellular location is the cytoplasm. It catalyses the reaction L-aspartate(89)-[ribosomal protein uS12]-hydrogen + (sulfur carrier)-SH + AH2 + 2 S-adenosyl-L-methionine = 3-methylsulfanyl-L-aspartate(89)-[ribosomal protein uS12]-hydrogen + (sulfur carrier)-H + 5'-deoxyadenosine + L-methionine + A + S-adenosyl-L-homocysteine + 2 H(+). Its function is as follows. Catalyzes the methylthiolation of an aspartic acid residue of ribosomal protein uS12. This is Ribosomal protein uS12 methylthiotransferase RimO from Rhodopseudomonas palustris (strain ATCC BAA-98 / CGA009).